The following is a 433-amino-acid chain: GTPase Obg (433 aa).

Residues 1–159 (MKFVDSADLI…FEIRAELKVL (159 aa)) enclose the Obg domain. One can recognise an OBG-type G domain in the interval 160–332 (ADVGFVGLPN…LLFMIYEELK (173 aa)). Residues 166 to 173 (GLPNAGKS), 191 to 195 (FTTIT), 213 to 216 (DLPG), 284 to 287 (NKMD), and 313 to 315 (SGL) each bind GTP. Residues serine 173 and threonine 193 each contribute to the Mg(2+) site. The OCT domain maps to 355 to 433 (KFEEQKEDIQ…VFDYELEWTD (79 aa)).

The protein belongs to the TRAFAC class OBG-HflX-like GTPase superfamily. OBG GTPase family. In terms of assembly, monomer. Mg(2+) serves as cofactor.

It is found in the cytoplasm. Functionally, an essential GTPase which binds GTP, GDP and possibly (p)ppGpp with moderate affinity, with high nucleotide exchange rates and a fairly low GTP hydrolysis rate. Plays a role in control of the cell cycle, stress response, ribosome biogenesis and in those bacteria that undergo differentiation, in morphogenesis control. The chain is GTPase Obg from Mycoplasma mycoides subsp. mycoides SC (strain CCUG 32753 / NCTC 10114 / PG1).